The primary structure comprises 239 residues: Probable plastid-lipid-associated protein 8, chloroplastic (239 aa).

The N-terminal 52 residues, Met1 to Ser52, are a transit peptide targeting the chloroplast. Ser53 is subject to N-acetylserine.

This sequence belongs to the PAP/fibrillin family.

The protein resides in the plastid. The protein localises to the chloroplast. The sequence is that of Probable plastid-lipid-associated protein 8, chloroplastic (PAP8) from Arabidopsis thaliana (Mouse-ear cress).